Consider the following 187-residue polypeptide: MTLISHDERLIKALAVAIVDRPRATLKELAEAAGVSKATLHRFCGTRDNLVQMLEDHGETVLNQIIQACDLEHAEPLEALQRLIKEHLTHRELLVFLVFQYRPDFLDPHGEGARWQSYLEALDAFFLRGQQKGVFRIDITAAVFTELFITLVYGMVDAERRGRAASSNSAHTLEQMFLHGASNPARS.

A DNA-binding region (H-T-H motif) is located at residues 26-45 (LKELAEAAGVSKATLHRFCG).

In terms of biological role, confers resistance to guinolones. May negatively regulate the expression of genes that are associated with cell permeability to drugs. The protein is HTH-type transcriptional regulator NfxB (nfxB) of Pseudomonas aeruginosa (strain ATCC 15692 / DSM 22644 / CIP 104116 / JCM 14847 / LMG 12228 / 1C / PRS 101 / PAO1).